Here is a 397-residue protein sequence, read N- to C-terminus: L-asparaginase-like protein GM15681 (397 aa).

An N-terminal signal peptide occupies residues 1-22 (MLAQSCCLRLLILLLLFTSICS). 3 disulfides stabilise this stretch: Cys90–Cys95, Cys189–Cys205, and Cys344–Cys371.

It belongs to the Ntn-hydrolase family.

The polypeptide is L-asparaginase-like protein GM15681 (Drosophila sechellia (Fruit fly)).